A 1138-amino-acid polypeptide reads, in one-letter code: MKKFSRMPKSEGSGGGAAAGGAAGGGLGGGFASSSMGVRVFAVGRYQVTLEESLAEGGFSTVFLVRTHSGIRCALKRMYVNNTPDLNICKREITIMKELSGHKNIVGYLDCAVNSISDNVWEVLILMEYCRAGQVVNQMNKKLQTGFTESEVLQIFCDTCEAVARLHQCKTPIIHRDLKVENILLNDAGNYVLCDFGSATNKFLNPQKDGVNVVEEEIKKYTTLSYRAPEMINLYGGKPITTKADIWALGCLLYKLCFFTLPFGESQVAICDGSFTIPDNSRYSHNVHCLIRFMLEPDPECRPDIFQVSYFAFKFAKKDCPVSNINNSFLPSTLPEPMTATEAAARKSQMKARITDTIGPTETSIAPRQRPKANSTAATSSVLTIQSSATPVKVPAPGEFSNHKPKGALRPGNGSEVLMVQGPPQQPPQQHRVLQQLQQGDWRLQQLHLHRHPHHHHQQQQQQQQQQQQQQLQQQQQQQQQLLQNAYLQQYQHAMHQQHILQQQFLMHSVYQPQPPASQYPAMMQQYQQAFLQQQMLARHQQPAQQVSPEYLTSPQEFSPALVSYASSLPAQVGTIVDSSYGANRSVAEKEAVANFTNQKTISHPPDMSGWNPFGEDNFSKLTEEELLDREFDLLRSNRLGASTPSDKTVDLPPAPHSRPPEEPFASVPFISHSGSPEKKTTEHSPNQKSITANLTKNGGSSPLCKDQRAGKKTSENPVIRGQVQKGHDDSESDFESDPPSPKSSEEEQEDEDAQGEHGDFNDDDTEPENLGHRPLLMDSEDEEEDDKHSSDSECEQAKTKRGDTSSLRRDKPGVAPDTALLTPARSPADALTPSQEFDVFGAVPFFAAPAPQSLQHRGDGKNLSQHAFPEQEDFDVFTKAPFNKKVSVQDWPAVGPDARPLPARPRSVDIFGSTPFQPFSVSASKSESKEDVFGLVPFEEITGSQQQQKVKQRSLQKLSSRQRRTKQDVSKSNGKRHHGTPTSAKKTLKPPYRTPERARRHKKVGRRDSQSSNEFLTISDSKENISVALTDGKDRASVLPSDESLLDPFGAKPFHPPDLWHQPHQGLSDICVDHTTILPGRPRQNSVHGSFHSAETLRMDDFGAVPFTELVVQSVTPQQSQPVELDPFGAAPFPSKQ.

Serine 13 bears the Phosphoserine mark. One can recognise a Protein kinase domain in the interval 48–313; sequence VTLEESLAEG…DIFQVSYFAF (266 aa). ATP-binding positions include 54–62 and lysine 76; that span reads LAEGGFSTV. The Proton acceptor role is filled by aspartate 177. Disordered regions lie at residues 355 to 435, 638 to 831, and 906 to 1018; these read TDTI…RVLQ, NRLG…PADA, and PRSV…EFLT. Residues 358–390 show a composition bias toward polar residues; that stretch reads IGPTETSIAPRQRPKANSTAATSSVLTIQSSAT. Positions 417–435 are enriched in low complexity; that stretch reads VLMVQGPPQQPPQQHRVLQ. Residue serine 676 is modified to Phosphoserine. Polar residues predominate over residues 684–701; the sequence is HSPNQKSITANLTKNGGS. Over residues 706 to 715 the composition is skewed to basic and acidic residues; the sequence is KDQRAGKKTS. A phosphoserine mark is found at serine 733, serine 806, and serine 807. The span at 787-813 shows a compositional bias: basic and acidic residues; sequence DKHSSDSECEQAKTKRGDTSSLRRDKP. Threonine 819 carries the phosphothreonine modification. Phosphoserine is present on serine 908. Over residues 915–926 the composition is skewed to polar residues; that stretch reads TPFQPFSVSASK. Over residues 951–965 the composition is skewed to basic residues; sequence VKQRSLQKLSSRQRR. A phosphoserine mark is found at serine 1010, serine 1012, serine 1013, serine 1020, serine 1022, serine 1087, and serine 1091. The tract at residues 1117 to 1138 is disordered; that stretch reads TPQQSQPVELDPFGAAPFPSKQ.

It belongs to the protein kinase superfamily. Ser/Thr protein kinase family. Autophosphorylated. Expressed in osteocytes and osteoblasts.

It localises to the nucleus. It carries out the reaction L-seryl-[protein] + ATP = O-phospho-L-seryl-[protein] + ADP + H(+). The enzyme catalyses L-threonyl-[protein] + ATP = O-phospho-L-threonyl-[protein] + ADP + H(+). In terms of biological role, may be involved in osteoblast differentiation. The sequence is that of BMP-2-inducible protein kinase (Bmp2k) from Mus musculus (Mouse).